The sequence spans 1550 residues: Adhesion G protein-coupled receptor L3 (1550 aa).

The signal sequence occupies residues 1–19; it reads MCPPQLFILMMLLAPVVHG. Residues 20–948 lie on the Extracellular side of the membrane; that stretch reads GKHNERHPAL…VHDLLLDVIT (929 aa). The disordered stretch occupies residues 34-80; it reads RHAEHSPGGPLPPRHLLQQPAAERSTAHRGQGPRGTARGVRGPGAPG. Residues 103–192 enclose the SUEL-type lectin domain; sequence SCESYPIELR…KYLEVQYECV (90 aa). Cystine bridges form between Cys104/Cys134, Cys113/Cys191, Cys146/Cys178, Cys159/Cys165, and Cys203/Cys385. A glycan (N-linked (GlcNAc...) asparagine) is linked at Asn161. The region spanning 202-461 is the Olfactomedin-like domain; it reads LCPGLLKGVY…VVKYSLDFGP (260 aa). The segment at 317-347 is interaction with FLRT3; it reads YHDTSPYRWGGKSDIDLAVDENGLWVIYATE. Positions 332, 380, 381, and 435 each coordinate Ca(2+). Residues 518-538 are disordered; the sequence is NLGRSTTPSLPGRRNRSTSTP. 5 N-linked (GlcNAc...) asparagine glycosylation sites follow: Asn532, Asn616, Asn839, Asn884, and Asn910. A GAIN-B domain is found at 755–934; sequence DIVRENTDNI…AVLMAHVEVK (180 aa). 2 disulfide bridges follow: Cys885/Cys916 and Cys904/Cys918. The segment at 885-934 is GPS; the sequence is CSFWSYSKRTMTGYWSTQGCRLLTTNKTHTTCSCNHLTNFAVLMAHVEVK. The stachel stretch occupies residues 922 to 938; that stretch reads TNFAVLMAHVEVKHSDA. Residues 949-969 traverse the membrane as a helical segment; sequence WVGILLSLVCLLICIFTFCFF. The Cytoplasmic segment spans residues 970 to 977; it reads RGLQSDRN. A helical membrane pass occupies residues 978 to 998; that stretch reads TIHKNLCISLFVAELLFLIGI. Residue Asn999 is glycosylated (N-linked (GlcNAc...) asparagine). Topologically, residues 999–1006 are extracellular; that stretch reads NRTDQPIA. The helical transmembrane segment at 1007–1027 threads the bilayer; the sequence is CAVFAALLHFFFLAAFTWMFL. Topologically, residues 1028–1048 are cytoplasmic; the sequence is EGVQLYIMLVEVFESEHSRRK. Residues 1049-1069 traverse the membrane as a helical segment; that stretch reads YFYLVGYGMPALIVAVSAAVD. The Extracellular portion of the chain corresponds to 1070–1087; sequence YRSYGTDKVCWLRLDTYF. Residues 1088–1108 form a helical membrane-spanning segment; that stretch reads IWSFIGPATLIIMLNVIFLGI. Topologically, residues 1109–1141 are cytoplasmic; sequence ALYKMFHHTAILKPESGCLDNINYEDNRPFIKS. A helical membrane pass occupies residues 1142–1162; it reads WVIGAIALLCLLGLTWAFGLM. Residues 1163–1168 are Extracellular-facing; the sequence is YINEST. A glycan (N-linked (GlcNAc...) asparagine) is linked at Asn1165. Residues 1169–1189 form a helical membrane-spanning segment; that stretch reads VIMAYLFTIFNSLQGMFIFIF. Residues 1190–1550 are Cytoplasmic-facing; it reads HCVLQKKVRK…KGPAHLVTSL (361 aa). The tract at residues 1213 to 1236 is disordered; sequence KSTESSIGSGKTSGSRTPGRYSTG. Ser1253 carries the post-translational modification Phosphoserine. Disordered regions lie at residues 1410–1435 and 1528–1550; these read LLPP…PQDH and PPNK…VTSL. Ser1535 carries the post-translational modification Phosphoserine. The PDZ-binding signature appears at 1545 to 1550; that stretch reads HLVTSL.

This sequence belongs to the G-protein coupled receptor 2 family. LN-TM7 subfamily. As to quaternary structure, heterodimer of 2 chains generated by proteolytic processing; the large extracellular N-terminal fragment and the membrane-bound C-terminal fragment predominantly remain associated and non-covalently linked. Interacts (via olfactomedin-like domain) with FLRT1 (via extracellular domain). Interacts (via olfactomedin-like domain) with FLRT2 (via extracellular domain). Interacts (via olfactomedin-like domain) with FLRT3 (via extracellular domain); the interaction is direct. Interacts (via extracellular domain) with TENM1. Interacts (via extracellular domain) with TENM2. Interacts (via extracellular domain) with TENM3. Identified in a complex with FLRT3 and UNC5B; does not interact with UNC5B by itself. Identified in a complex with FLRT3 and UNC5D; does not interact with UNC5D by itself. Interacts (via PDZ-binding motif) with SHANK3. Interacts (via PDZ-binding motif) with DLG4. In terms of processing, autoproteolytically processed at the GPS region of the GAIN-B domain; this cleavage modulates receptor activity. In terms of tissue distribution, predominantly expressed in brain, followed by heart, placenta, pancreas, kidney and testis.

It localises to the cell membrane. Its subcellular location is the postsynaptic cell membrane. The protein localises to the cell projection. The protein resides in the axon. It is found in the cell junction. Its activity is regulated as follows. Forms a heterodimer of 2 chains generated by proteolytic processing that remain associated through non-covalent interactions mediated by the GAIN-B domain. In the inactivated receptor, the Stachel sequence (also named stalk) is embedded in the GAIN-B domain, where it adopts a beta-strand conformation. On activation, the Stachel moves into the 7 transmembrane region and adopts a twisted hook-shaped configuration that forms contacts within the receptor, leading to coupling of a G-alpha protein, which activates signaling. The cleaved GAIN-B and N-terminal domains can then dissociate from the rest of the receptor. Its function is as follows. Orphan adhesion G-protein coupled receptor (aGPCR), which mediates synapse specificity. Ligand binding causes a conformation change that triggers signaling via guanine nucleotide-binding proteins (G proteins) and modulates the activity of downstream effectors. ADGRL3 is coupled with different classes of G alpha proteins, such as G(12)/G(13), G(s), G(i) or G(q), depending on the context. Coupling to G(12)/G(13) G proteins, which mediates the activation Rho small GTPases is the most efficient. Following G-protein coupled receptor activation, associates with cell adhesion molecules that are expressed at the surface of adjacent cells to direct synapse specificity. Specifically mediates the establishment of Schaffer-collateral synapses formed by CA3-region axons on CA1-region pyramidal neurons in the hippocampus. Localizes to postsynaptic spines in excitatory synapses in the S.oriens and S.radiatum and interacts with presynaptic cell adhesion molecules FLRT3 and TENM2, promoting synapse formation. Plays a role in the development of glutamatergic synapses in the cortex. Important in determining the connectivity rates between the principal neurons in the cortex. In terms of biological role, orphan adhesion G-protein coupled receptor (aGPCR), which mediates synapse specificity. Ligand binding causes a conformation change that triggers signaling via guanine nucleotide-binding proteins (G proteins) and modulates the activity of downstream effectors, such as adenylate cyclase. Isoform 1 is specifically coupled to G(s) G proteins and mediates activation of adenylate cyclase activity. Following G-protein coupled receptor activation, undergoes liquid-liquid phase transition, associates with (1) cell adhesion molecules that are expressed at the surface of adjacent cells, as well as (2) PDZ-containing proteins, such as SHANK3 and DLG4, in the cytoplasm to direct synapse formation. The protein is Adhesion G protein-coupled receptor L3 of Rattus norvegicus (Rat).